We begin with the raw amino-acid sequence, 379 residues long: RIB43A-like with coiled-coils protein 1 (379 aa).

A disordered region spans residues 1-21 (MYNINQSTDTKEAAAIEARRN). A compositionally biased stretch (basic and acidic residues) spans 9 to 21 (DTKEAAAIEARRN). Coiled coils occupy residues 85-111 (ADRTRRLAKKVQEFREQKQQLKNGREF), 161-241 (RYNL…KANL), and 280-304 (EQRAAIRKEQEVQRSKKEAHRQAEK).

The protein belongs to the RIB43A family. As to quaternary structure, microtubule inner protein component of sperm flagellar doublet microtubules.

The protein resides in the cytoplasm. The protein localises to the cytoskeleton. Its subcellular location is the flagellum axoneme. The polypeptide is RIB43A-like with coiled-coils protein 1 (RIBC1) (Macaca fascicularis (Crab-eating macaque)).